Consider the following 208-residue polypeptide: Uracil phosphoribosyltransferase (208 aa).

Residues arginine 78, arginine 103, and aspartate 130 to serine 138 each bind 5-phospho-alpha-D-ribose 1-diphosphate. Uracil-binding positions include isoleucine 193 and glycine 198 to alanine 200. Residue aspartate 199 coordinates 5-phospho-alpha-D-ribose 1-diphosphate.

It belongs to the UPRTase family. The cofactor is Mg(2+).

The catalysed reaction is UMP + diphosphate = 5-phospho-alpha-D-ribose 1-diphosphate + uracil. The protein operates within pyrimidine metabolism; UMP biosynthesis via salvage pathway; UMP from uracil: step 1/1. Allosterically activated by GTP. Functionally, catalyzes the conversion of uracil and 5-phospho-alpha-D-ribose 1-diphosphate (PRPP) to UMP and diphosphate. This is Uracil phosphoribosyltransferase from Sodalis glossinidius (strain morsitans).